A 113-amino-acid polypeptide reads, in one-letter code: Dolichyl-diphosphooligosaccharide--protein glycosyltransferase subunit DAD1 (113 aa).

Ser-2 bears the N-acetylserine mark. At 2 to 30 (SASVVSVISRFLEEYLSSTPQRLKLLDAY) the chain is on the cytoplasmic side. The chain crosses the membrane as a helical span at residues 31-51 (LLYILLTGALQFGYCLLVGTF). Pro-52 is a topological domain (lumenal). The helical transmembrane segment at 53 to 73 (FNSFLSGFISCVGSFILAVCL) threads the bilayer. The Cytoplasmic portion of the chain corresponds to 74-92 (RIQINPQNKADFQGISPER). Residues 93–113 (AFADFLFASTILHLVVMNFVG) traverse the membrane as a helical segment.

This sequence belongs to the DAD/OST2 family. As to quaternary structure, component of the oligosaccharyltransferase (OST) complex. OST exists in two different complex forms which contain common core subunits RPN1, RPN2, OST48, OST4, DAD1 and TMEM258, either STT3A or STT3B as catalytic subunits, and form-specific accessory subunits. STT3A complex assembly occurs through the formation of 3 subcomplexes. Subcomplex 1 contains RPN1 and TMEM258, subcomplex 2 contains the STT3A-specific subunits STT3A, DC2/OSTC, and KCP2 as well as the core subunit OST4, and subcomplex 3 contains RPN2, DAD1, and OST48. The STT3A complex can form stable complexes with the Sec61 complex or with both the Sec61 and TRAP complexes.

The protein localises to the endoplasmic reticulum membrane. Its pathway is protein modification; protein glycosylation. In terms of biological role, subunit of the oligosaccharyl transferase (OST) complex that catalyzes the initial transfer of a defined glycan (Glc(3)Man(9)GlcNAc(2) in eukaryotes) from the lipid carrier dolichol-pyrophosphate to an asparagine residue within an Asn-X-Ser/Thr consensus motif in nascent polypeptide chains, the first step in protein N-glycosylation. N-glycosylation occurs cotranslationally and the complex associates with the Sec61 complex at the channel-forming translocon complex that mediates protein translocation across the endoplasmic reticulum (ER). All subunits are required for a maximal enzyme activity. The sequence is that of Dolichyl-diphosphooligosaccharide--protein glycosyltransferase subunit DAD1 from Mus musculus (Mouse).